We begin with the raw amino-acid sequence, 79 residues long: U-actitoxin-Oulsp1 (79 aa).

An N-terminal signal peptide occupies residues 1–21 (MNTKLVVVFLLSAILFVSVTA). A propeptide spanning residues 22-43 (SRPGKDLERDEAYETYDDENKR) is cleaved from the precursor. The 35-residue stretch at 45-79 (CKDVFPAATCRHAKSVGNCSSEKYKRNCAITCGAC) folds into the ShKT domain. 3 disulfides stabilise this stretch: cysteine 45/cysteine 79, cysteine 54/cysteine 72, and cysteine 63/cysteine 76. The segment at 67 to 68 (KY) is crucial for binding to potassium channels.

Belongs to the sea anemone type 1 potassium channel toxin family. Type 1b subfamily. In terms of processing, two similar peptides (OspTx2a-p1 and -p2) are obtained after synthesis and oxidative folding. They may differ by a D-Cys at position 76 (corresponding to OspTx2a-p2). Since C-terminal Cys residues are prone to racemization during solid-phase peptide synthesis, and if the presence of a D-amino acid is correct, it is probable that OspTx2a-p1 (L-Cys-76 form) corresponds to the native peptide.

It localises to the secreted. Toxin that weakly blocks the two voltage-gated potassium channels on Kv1.2/KCNA2 (IC(50)=1.8-2.5 uM) and Kv1.6/KCNA6 (IC(50)=5.6-6.2 uM). The chain is U-actitoxin-Oulsp1 from Oulactis sp. (Sea anemone).